Here is a 370-residue protein sequence, read N- to C-terminus: tRNA-specific 2-thiouridylase MnmA (370 aa).

ATP contacts are provided by residues 6–13 (AMSGGVDS) and Leu-32. The active-site Nucleophile is Cys-101. Cys-101 and Cys-193 are joined by a disulfide. Gly-125 is a binding site for ATP. An interaction with tRNA region spans residues 143–145 (KDQ). The active-site Cysteine persulfide intermediate is Cys-193.

The protein belongs to the MnmA/TRMU family.

The protein resides in the cytoplasm. The catalysed reaction is S-sulfanyl-L-cysteinyl-[protein] + uridine(34) in tRNA + AH2 + ATP = 2-thiouridine(34) in tRNA + L-cysteinyl-[protein] + A + AMP + diphosphate + H(+). Catalyzes the 2-thiolation of uridine at the wobble position (U34) of tRNA, leading to the formation of s(2)U34. The polypeptide is tRNA-specific 2-thiouridylase MnmA (Rhodococcus erythropolis (strain PR4 / NBRC 100887)).